The sequence spans 192 residues: Glycerol-3-phosphate acyltransferase (192 aa).

5 helical membrane passes run 1 to 21 (MTSA…GVLL), 51 to 71 (LGAV…VLAV), 78 to 98 (PTVH…PVWL), 112 to 132 (VLLV…VAVF), and 155 to 175 (LTAR…LMLW).

Belongs to the PlsY family. In terms of assembly, probably interacts with PlsX.

It is found in the cell inner membrane. It catalyses the reaction an acyl phosphate + sn-glycerol 3-phosphate = a 1-acyl-sn-glycero-3-phosphate + phosphate. It functions in the pathway lipid metabolism; phospholipid metabolism. Functionally, catalyzes the transfer of an acyl group from acyl-phosphate (acyl-PO(4)) to glycerol-3-phosphate (G3P) to form lysophosphatidic acid (LPA). This enzyme utilizes acyl-phosphate as fatty acyl donor, but not acyl-CoA or acyl-ACP. This Myxococcus xanthus (strain DK1622) protein is Glycerol-3-phosphate acyltransferase.